Here is a 372-residue protein sequence, read N- to C-terminus: uncharacterized protein (372 aa).

A helical transmembrane segment spans residues 224–244; the sequence is GSTVGVVIGVVIVIFIGFIII. Residue Ser-329 is modified to Phosphoserine.

The protein localises to the vacuole membrane. This is an uncharacterized protein from Saccharomyces cerevisiae (strain ATCC 204508 / S288c) (Baker's yeast).